A 351-amino-acid chain; its full sequence is MKAYAMLKIGATGWIEKPRPVCGPNDAIIRPLAVAPCTSDVHTVWEGGIGERHNMVLGHEGCGVVDEVGSEVKSFKVGDRVLVAAITPEWNSVNAQAGYPMHSGGMLGGWKFSNVKDGMFAEYFHVNDAEGNLALMPEGMDLADACMLSDMIPTGFHANELADIQYGVALSFFCAGPVGLMAIAGAALKGAGRIIVVDSRPDIVEIAKAYGATDYIDFKKVSVVDEILKWTNNEGVEKVLISGGGSTILETAIKVLRPGGKIGNVNYFGAGEFLTIPRVEWGVGMAHKAIHGGLMLGGRLRLEKLARLIMTKKLDPSKMITHRFKGFEHIEEALFLMKDKPKDLIKSVVIF.

Zn(2+) contacts are provided by Cys37, His59, Glu60, and Asp150. Residues 175–178 (AGPV), 198–200 (DSR), 265–267 (VNY), and Lys340 each bind NADP(+).

It belongs to the zinc-containing alcohol dehydrogenase family. Zn(2+) is required as a cofactor.

The catalysed reaction is propan-2-ol + NADP(+) = acetone + NADPH + H(+). Alcohol dehydrogenase with a preference for medium chain secondary alcohols, such as 2-butanol and isopropanol. Has very low activity with primary alcohols, such as ethanol. Under physiological conditions, the enzyme reduces aldehydes and 2-ketones to produce secondary alcohols. Is also active with acetaldehyde and propionaldehyde. The chain is Probable NADP-dependent isopropanol dehydrogenase (adh) from Mycoplasma pneumoniae (strain ATCC 29342 / M129 / Subtype 1) (Mycoplasmoides pneumoniae).